The primary structure comprises 506 residues: FAD-linked oxidoreductase aurO (506 aa).

Residues 92 to 260 enclose the FAD-binding PCMH-type domain; sequence ITAQPLAICR…AETDVRVYPM (169 aa).

The protein belongs to the oxygen-dependent FAD-linked oxidoreductase family. Might be part of an extracellular enzyme complex composed of GIP1, aurF, aurO and aurS. The cofactor is FAD.

Its subcellular location is the secreted. It is found in the extracellular space. It functions in the pathway pigment biosynthesis. In terms of biological role, FAD-linked oxidoreductase; part of the gene cluster that mediates the biosynthesis of aurofusarin, a red mycelium pigment which is acting as a mycotoxin. The first step is performed by the polyketide synthase which condenses one acetyl-CoA and 6 malonyl-CoA units to form the first intermediate, the cyclic heptaketide and yellow pigment YWA1. The C2 hydroxyl group in the pyrone ring of YWA1 is probably formed during ring closure by an aldol-type cyclization reaction. The dehydratase aurZ then acts as the first tailoring enzyme in the aurofusarin biosynthetic pathway by converting YWA1 to nor-rubrofusarin. Nor-rubrofusarin is then methylated to rubrofusarin by the O-methyltransferase aurJ. Rubrofusarin is then transported across the plasma membrane by the rubrofusarin-specific pump aurT for further enzymatic processing by the extracellular complex composed of GIP1, aurF, aurO and aurS to yield aurofusarin. In Gibberella zeae (strain ATCC MYA-4620 / CBS 123657 / FGSC 9075 / NRRL 31084 / PH-1) (Wheat head blight fungus), this protein is FAD-linked oxidoreductase aurO.